Here is a 73-residue protein sequence, read N- to C-terminus: Serine rich endogenous peptide 1 (73 aa).

The signal sequence occupies residues 1–28 (MGMSGSSGLVHVLMLLLLLSILFHHTES). The tract at residues 48–73 (YKPNTAVETPPSRSRRGGGGQNTGAD) is disordered. Residues 53-67 (AVETPPSRSRRGGGG) carry the SCOOP motif motif. The SxS motif essential for MIK2 binding signature appears at 59–61 (SRS). The span at 64 to 73 (GGGGQNTGAD) shows a compositional bias: gly residues.

This sequence belongs to the serine rich endogenous peptide (SCOOP) phytocytokine family. Interacts with MIK2 (via extracellular leucine-rich repeat domain); this interaction triggers the formation of complex between MIK2 and the BAK1/SERK3 and SERK4 coreceptors, and subsequent BAK1 activation by phosphorylation. In terms of tissue distribution, mostly expressed in leaves and flowers, and, to a lower extent, in seedlings shoots.

The protein localises to the cell membrane. It is found in the secreted. It localises to the extracellular space. Its subcellular location is the apoplast. Functionally, brassicaceae-specific phytocytokine (plant endogenous peptide released into the apoplast) perceived by MIK2 in a BAK1/SERK3 and SERK4 coreceptors-dependent manner, that modulates various physiological and antimicrobial processes including growth prevention and reactive oxygen species (ROS) response regulation. The chain is Serine rich endogenous peptide 1 from Arabidopsis thaliana (Mouse-ear cress).